The chain runs to 328 residues: Ribosomal RNA large subunit methyltransferase F (328 aa).

The segment at Met-1–Asn-31 is disordered.

The protein belongs to the methyltransferase superfamily. METTL16/RlmF family.

Its subcellular location is the cytoplasm. It catalyses the reaction adenosine(1618) in 23S rRNA + S-adenosyl-L-methionine = N(6)-methyladenosine(1618) in 23S rRNA + S-adenosyl-L-homocysteine + H(+). Its function is as follows. Specifically methylates the adenine in position 1618 of 23S rRNA. In Pseudomonas savastanoi pv. phaseolicola (strain 1448A / Race 6) (Pseudomonas syringae pv. phaseolicola (strain 1448A / Race 6)), this protein is Ribosomal RNA large subunit methyltransferase F.